Reading from the N-terminus, the 325-residue chain is Beta-ketoacyl-[acyl-carrier-protein] synthase III (325 aa).

Residues Cys112 and His250 contribute to the active site. Residues 251–255 are ACP-binding; that stretch reads QANSR. Asn280 is an active-site residue.

Belongs to the thiolase-like superfamily. FabH family. Homodimer.

It is found in the cytoplasm. The enzyme catalyses malonyl-[ACP] + acetyl-CoA + H(+) = 3-oxobutanoyl-[ACP] + CO2 + CoA. The protein operates within lipid metabolism; fatty acid biosynthesis. Functionally, catalyzes the condensation reaction of fatty acid synthesis by the addition to an acyl acceptor of two carbons from malonyl-ACP. Catalyzes the first condensation reaction which initiates fatty acid synthesis and may therefore play a role in governing the total rate of fatty acid production. Possesses both acetoacetyl-ACP synthase and acetyl transacylase activities. Its substrate specificity determines the biosynthesis of branched-chain and/or straight-chain of fatty acids. The protein is Beta-ketoacyl-[acyl-carrier-protein] synthase III of Lactococcus lactis subsp. cremoris (strain MG1363).